Consider the following 281-residue polypeptide: Probable endonuclease 4 (281 aa).

9 residues coordinate Zn(2+): His-70, His-110, Glu-146, Asp-180, His-183, His-217, Asp-230, His-232, and Glu-262.

It belongs to the AP endonuclease 2 family. Zn(2+) serves as cofactor.

It carries out the reaction Endonucleolytic cleavage to 5'-phosphooligonucleotide end-products.. Endonuclease IV plays a role in DNA repair. It cleaves phosphodiester bonds at apurinic or apyrimidinic (AP) sites, generating a 3'-hydroxyl group and a 5'-terminal sugar phosphate. In Nitratiruptor sp. (strain SB155-2), this protein is Probable endonuclease 4.